The following is a 308-amino-acid chain: Cis-prenyltransferase 4, chloroplastic (308 aa).

The N-terminal 45 residues, 1–45, are a transit peptide targeting the chloroplast; that stretch reads MAFSLQLQQIFVSYTRFCSQPKSITNPLISLKLPSIHPLAFAQNA. D84 is an active-site residue.

It belongs to the UPP synthase family. It depends on Mg(2+) as a cofactor. Widely expressed.

Its subcellular location is the plastid. It is found in the chloroplast. In terms of biological role, uses neryl diphosphate and geranyl diphosphate to catalyze the cis-prenyl chain elongation and produce polyprenyl diphosphate with a chain of 55 carbons. The polypeptide is Cis-prenyltransferase 4, chloroplastic (Solanum lycopersicum (Tomato)).